Consider the following 67-residue polypeptide: Amphipathic peptide Tx348 (67 aa).

Positions 1–23 are cleaved as a signal peptide; the sequence is MKSQAFFLLFLVVLLLATTQSEA. Phenylalanine 33 carries the post-translational modification Phenylalanine amide. Residues 37–67 constitute a propeptide that is removed on maturation; it reads SMRNMDTMKYLYDPSLSAADLKTLQKLMENY.

It belongs to the non-disulfide-bridged peptide (NDBP) superfamily. Short antimicrobial peptide (group 4) family. As to expression, expressed by the venom gland.

It is found in the secreted. It localises to the target cell membrane. Amphipathic peptide that has antibacterial activities. The sequence is that of Amphipathic peptide Tx348 from Buthus israelis (Israeli scorpion).